The primary structure comprises 83 residues: Small ribosomal subunit protein uS17 (83 aa).

This sequence belongs to the universal ribosomal protein uS17 family. In terms of assembly, part of the 30S ribosomal subunit.

Its function is as follows. One of the primary rRNA binding proteins, it binds specifically to the 5'-end of 16S ribosomal RNA. In Francisella tularensis subsp. holarctica (strain FTNF002-00 / FTA), this protein is Small ribosomal subunit protein uS17.